Consider the following 71-residue polypeptide: Omega-conotoxin-like CnVIIE (71 aa).

Residues 1 to 22 (MKLTCVVIVAVLLLTACQLITA) form the signal peptide. The propeptide occupies 23-45 (DDSRGTQKHRALRSDTKLSMSTR). Disulfide bonds link C46–C61, C53–C65, and C60–C70. P52 carries the 4-hydroxyproline; partial modification. A Cysteine amide modification is found at C70.

Belongs to the conotoxin M superfamily. In terms of tissue distribution, expressed by the venom duct.

The protein localises to the secreted. Its function is as follows. Omega-conotoxins act at presynaptic membranes, they bind and block voltage-gated calcium channels (Cav). This chain is Omega-conotoxin-like CnVIIE, found in Conus consors (Singed cone).